Here is a 492-residue protein sequence, read N- to C-terminus: Beclin 1-associated autophagy-related key regulator (492 aa).

At S29 the chain carries Phosphoserine. Positions 43-58 (CPLCNTTRRRLTCAKC) are cysteine repeats. The stretch at 71–180 (DRERFIDKKE…KLGDLVEKKT (110 aa)) forms a coiled coil. The segment at 410-473 (PGVAGESDES…PIASSSAGGM (64 aa)) is disordered. A BATS region spans residues 413-492 (AGESDESGDE…SWFKAYTGHR (80 aa)). The segment covering 415 to 433 (ESDESGDERVSDEETDLGT) has biased composition (acidic residues). S416 carries the post-translational modification Phosphoserine. Position 429 is a phosphothreonine (T429). The span at 448–473 (SQSVEVSQSQSTQASPPIASSSAGGM) shows a compositional bias: low complexity.

This sequence belongs to the ATG14 family. Forms homooligomers; homo-oligomerization is essential for the roles in membrane tethering and enhancement of SNARE-mediated fusion. Component of the PI3K (PI3KC3/PI3K-III/class III phosphatidylinositol 3-kinase) complex I (PI3KC3-C1) in which the core composed of the catalytic subunit PIK3C3, the regulatory subunit PIK3R4 and BECN1 is associated with ATG14. PI3KC3-C1 displays a V-shaped architecture with PIK3R4 serving as a bridge between PIK3C3 and the ATG14:BECN1 subcomplex. PI3KC3-C1 can associate with further regulatory subunits. Interacts with PIK3CB. Interacts (via coiled-coil domain) with BECN2 (via coiled-coil domain); this interaction is tighter than BECN2 self-association. Interacts with the STX17-SNAP29 binary t-SNARE complex. Interacts with NRBF2. Interacts with PIK3C3 and BECN1; this interaction is increased in the absence of TMEM39A. Interacts with STEEP1; the interaction is required for trafficking of STING1 from the endoplasmic reticulum. Interacts with ARMC3 (via ARM domains). Ubiquitinated via 'Lys-6', 'Lys-11' and 'Lys-63'-linked polyubiquitin chains on multiple lysines by MARCHF7, leading to ATG14 aggregation and loss of interaction with STX17.

It is found in the cytoplasm. The protein localises to the endoplasmic reticulum membrane. Its subcellular location is the preautophagosomal structure membrane. It localises to the cytoplasmic vesicle. The protein resides in the autophagosome membrane. Required for both basal and inducible autophagy. Determines the localization of the autophagy-specific PI3-kinase complex PI3KC3-C1. Plays a role in autophagosome formation and MAP1LC3/LC3 conjugation to phosphatidylethanolamine. Promotes BECN1 translocation from the trans-Golgi network to autophagosomes. Enhances PIK3C3 activity in a BECN1-dependent manner. Essential for the autophagy-dependent phosphorylation of BECN1. Stimulates the phosphorylation of BECN1, but suppresses the phosphorylation PIK3C3 by AMPK. Binds to STX17-SNAP29 binary t-SNARE complex on autophagosomes and primes it for VAMP8 interaction to promote autophagosome-endolysosome fusion. Modulates the hepatic lipid metabolism. This is Beclin 1-associated autophagy-related key regulator from Homo sapiens (Human).